A 173-amino-acid chain; its full sequence is Zinc finger matrin-type protein 5 (173 aa).

The C3H1-type zinc-finger motif lies at 51–79 (ERSKEVCRKFVQTGQCVFGTSCRFSHMSE). The tract at residues 83–111 (KMLEQKIDDEKRQKEDPDQDGSSERSVDE) is disordered.

In terms of assembly, component of the U11/U12 snRNPs that are part of the U12-type spliceosome.

The protein resides in the nucleus. The chain is Zinc finger matrin-type protein 5 (zmat5) from Danio rerio (Zebrafish).